We begin with the raw amino-acid sequence, 1207 residues long: Brassinosteroid LRR receptor kinase (1207 aa).

The N-terminal stretch at 1-34 (MKAHKTVFNQHPLSLNKLFFVLLLIFFLPPASPA) is a signal peptide. The short motif at 71-78 (CSFTGVSC) is the Cys pair 1 element. LRR repeat units lie at residues 109 to 131 (NLESLVLKNANLSGSLTSAAKSQ), 135 to 157 (TLDSIDLAENTISGPISDISSFG), 161 to 181 (NLKSLNLSKNFLDPPGKEMLK), 186 to 207 (SLQVLDLSYNNISGFNLFPWVS), 213 to 234 (ELEFFSLKGNKLAGSIPELDFK), 235 to 257 (NLSYLDLSANNFSTVFPSFKDCS), 258 to 280 (NLQHLDLSSNKFYGDIGSSLSSC), 282 to 304 (KLSFLNLTNNQFVGLVPKLPSES), 305 to 325 (LQYLYLRGNDFQGVYPNQLAD), 329 to 350 (TVVELDLSYNNFSGMVPESLGE), 353 to 374 (SLELVDISYNNFSGKLPVDTLS), 378 to 400 (NIKTMVLSFNKFVGGLPDSFSNL), 402 to 423 (KLETLDMSSNNLTGVIPSGICK), 428 to 450 (NLKVLYLQNNLFKGPIPDSLSNC), 452 to 474 (QLVSLDLSFNYLTGSIPSSLGSL), 476 to 499 (KLKDLILWLNQLSGEIPQELMYLQ), 500 to 523 (ALENLILDFNDLTGPIPASLSNCT), 524 to 547 (KLNWISLSNNQLSGEIPASLGRLS), 548 to 570 (NLAILKLGNNSISGNIPAELGNC), and 572 to 594 (SLIWLDLNTNFLNGSIPPPLFKQ). N119 is a glycosylation site (N-linked (GlcNAc...) asparagine). N-linked (GlcNAc...) asparagine glycans are attached at residues N166 and N196. 2 N-linked (GlcNAc...) asparagine glycosylation sites follow: N235 and N245. Residue N287 is glycosylated (N-linked (GlcNAc...) asparagine). 2 N-linked (GlcNAc...) asparagine glycosylation sites follow: N339 and N363. Residues N412 and N449 are each glycosylated (N-linked (GlcNAc...) asparagine). N521 is a glycosylation site (N-linked (GlcNAc...) asparagine). N-linked (GlcNAc...) asparagine glycans are attached at residues N556, N584, N646, and N662. 4 LRR repeats span residues 664-686 (SMIFLDLSYNKLEGSIPKELGAM), 688-711 (YLSILNLGHNDLSGMIPQQLGGLK), 712-735 (NVAILDLSYNRFNGTIPNSLTSLT), and 736-758 (LLGEIDLSNNNLSGMIPESAPFD). N-linked (GlcNAc...) asparagine glycans are attached at residues N724, N746, and N767. The Cys pair 2 motif lies at 771–779 (CGYPLPIPC). Residues 803–823 (SVAMGLLFSLFCIFGLIIVAI) form a helical membrane-spanning segment. The Protein kinase domain maps to 888–1163 (FHNDSLVGSG…IQVMAMFKEI (276 aa)). ATP contacts are provided by residues 894-902 (VGSGGFGDV) and K916. Catalysis depends on D1014, which acts as the Proton acceptor.

Belongs to the protein kinase superfamily. Ser/Thr protein kinase family.

Its subcellular location is the cell membrane. It catalyses the reaction L-seryl-[protein] + ATP = O-phospho-L-seryl-[protein] + ADP + H(+). The enzyme catalyses L-threonyl-[protein] + ATP = O-phospho-L-threonyl-[protein] + ADP + H(+). Receptor with a serine/threonine-protein kinase activity. Regulates, in response to brassinosteroid binding, a signaling cascade involved in plant development, including expression of light- and stress-regulated genes, promotion of cell elongation, normal leaf and chloroplast senescence, and flowering. May be involved in a feedback regulation of brassinosteroid biosynthesis. May be also involved in the perception of systemin, a peptide hormone responsible for the systemic activation of defense genes in leaves of wounded plants. The protein is Brassinosteroid LRR receptor kinase (CURL3) of Solanum lycopersicum (Tomato).